Here is a 453-residue protein sequence, read N- to C-terminus: Acyl-coenzyme A thioesterase 2, mitochondrial (453 aa).

The transit peptide at 1-42 directs the protein to the mitochondrion; sequence MVASSFAVLRASRLCQQDWKSWARLFVPPPLSTGGRTTWART. N6-acetyllysine is present on K83. Residues S273, D365, and H399 each act as charge relay system in the active site. K447 bears the N6-succinyllysine mark.

Belongs to the C/M/P thioester hydrolase family. In terms of assembly, monomer. Highly expressed in brown and white adipose tissue, muscle, heart, kidney, lung, adrenal gland and spleen; weakly expressed in intestine, testis and brain.

The protein localises to the mitochondrion matrix. It carries out the reaction hexadecanoyl-CoA + H2O = hexadecanoate + CoA + H(+). The catalysed reaction is tetradecanoyl-CoA + H2O = tetradecanoate + CoA + H(+). It catalyses the reaction octadecanoyl-CoA + H2O = octadecanoate + CoA + H(+). The enzyme catalyses eicosanoyl-CoA + H2O = eicosanoate + CoA + H(+). It carries out the reaction decanoyl-CoA + H2O = decanoate + CoA + H(+). The catalysed reaction is dodecanoyl-CoA + H2O = dodecanoate + CoA + H(+). It catalyses the reaction (9Z)-octadecenoyl-CoA + H2O = (9Z)-octadecenoate + CoA + H(+). The enzyme catalyses (9Z)-hexadecenoyl-CoA + H2O = (9Z)-hexadecenoate + CoA + H(+). It carries out the reaction (9E)-octadecenoyl-CoA + H2O = (9E)-octadecenoate + CoA + H(+). The catalysed reaction is (9Z,12Z)-octadecadienoyl-CoA + H2O = (9Z,12Z)-octadecadienoate + CoA + H(+). Its pathway is lipid metabolism; fatty acid metabolism. In terms of biological role, catalyzes the hydrolysis of acyl-CoAs into free fatty acids and coenzyme A (CoASH), regulating their respective intracellular levels. Displays higher activity toward long chain acyl CoAs (C14-C20). The enzyme is involved in enhancing the hepatic fatty acid oxidation in mitochondria. The protein is Acyl-coenzyme A thioesterase 2, mitochondrial (Acot2) of Mus musculus (Mouse).